Reading from the N-terminus, the 316-residue chain is Transaldolase A (316 aa).

Catalysis depends on lysine 131, which acts as the Schiff-base intermediate with substrate.

It belongs to the transaldolase family. Type 1 subfamily. Homodimer.

It is found in the cytoplasm. It catalyses the reaction D-sedoheptulose 7-phosphate + D-glyceraldehyde 3-phosphate = D-erythrose 4-phosphate + beta-D-fructose 6-phosphate. It participates in carbohydrate degradation; pentose phosphate pathway; D-glyceraldehyde 3-phosphate and beta-D-fructose 6-phosphate from D-ribose 5-phosphate and D-xylulose 5-phosphate (non-oxidative stage): step 2/3. Transaldolase is important for the balance of metabolites in the pentose-phosphate pathway. The polypeptide is Transaldolase A (talA) (Escherichia coli O157:H7).